The following is a 107-amino-acid chain: Ribosome-associated factor Y (107 aa).

Positions 85–107 (LNKLQHKSESRRADERLKDSFEN) are disordered.

Associates mainly with 70S ribosomes.

Functionally, during stationary phase, prevents 70S dimer formation, probably in order to regulate translation efficiency during transition between the exponential and the stationary phases. In addition, during environmental stress such as cold shock or excessive cell density at stationary phase, stabilizes the 70S ribosome against dissociation, inhibits translation initiation and increase translation accuracy. When normal growth conditions are restored, is quickly released from the ribosome. The protein is Ribosome-associated factor Y of Haemophilus influenzae (strain ATCC 51907 / DSM 11121 / KW20 / Rd).